Here is a 249-residue protein sequence, read N- to C-terminus: 1-(5-phosphoribosyl)-5-[(5-phosphoribosylamino)methylideneamino] imidazole-4-carboxamide isomerase (249 aa).

Residue aspartate 10 is the Proton acceptor of the active site. Catalysis depends on aspartate 136, which acts as the Proton donor.

Belongs to the HisA/HisF family.

The protein resides in the cytoplasm. It carries out the reaction 1-(5-phospho-beta-D-ribosyl)-5-[(5-phospho-beta-D-ribosylamino)methylideneamino]imidazole-4-carboxamide = 5-[(5-phospho-1-deoxy-D-ribulos-1-ylimino)methylamino]-1-(5-phospho-beta-D-ribosyl)imidazole-4-carboxamide. It functions in the pathway amino-acid biosynthesis; L-histidine biosynthesis; L-histidine from 5-phospho-alpha-D-ribose 1-diphosphate: step 4/9. This chain is 1-(5-phosphoribosyl)-5-[(5-phosphoribosylamino)methylideneamino] imidazole-4-carboxamide isomerase, found in Symbiobacterium thermophilum (strain DSM 24528 / JCM 14929 / IAM 14863 / T).